We begin with the raw amino-acid sequence, 325 residues long: Cytochrome f (325 aa).

A signal peptide spans 1–40 (MSKINLSTMWSSFIKKIAKTILVAIACISLFLTSSPAANA). Residues Tyr-41, Cys-62, Cys-65, and His-66 each contribute to the heme site. The helical transmembrane segment at 291–311 (VKWLMAFFALVMLAQIMLVLK) threads the bilayer.

It belongs to the cytochrome f family. As to quaternary structure, the 4 large subunits of the cytochrome b6-f complex are cytochrome b6, subunit IV (17 kDa polypeptide, PetD), cytochrome f and the Rieske protein, while the 4 small subunits are PetG, PetL, PetM and PetN. The complex functions as a dimer. Requires heme as cofactor.

The protein localises to the cellular thylakoid membrane. Component of the cytochrome b6-f complex, which mediates electron transfer between photosystem II (PSII) and photosystem I (PSI), cyclic electron flow around PSI, and state transitions. This Trichodesmium erythraeum (strain IMS101) protein is Cytochrome f.